The chain runs to 391 residues: Steroid side-chain-cleaving aldolase (391 aa).

Tyr-294 functions as the Proton acceptor in the catalytic mechanism. The active-site Proton donor is the Tyr-344.

This sequence belongs to the thiolase-like superfamily. As to quaternary structure, homodimer. Interacts with the ChsH1/ChsH2 hydratase via the DUF35 C-terminal region of ChsH2 (ChsH2-DUF35).

It catalyses the reaction 17-hydroxy-3-oxochol-4-en-22-oyl-CoA = androst-4-ene-3,17-dione + propanoyl-CoA. Its function is as follows. Probably involved in bile acid degradation. In vitro, when associated with the ChsH1/ChsH2 hydratase, catalyzes the retroaldol cleavage of 17-hydroxy-3-oxo-4-pregnene-20-carboxyl-CoA (17-HOPC-CoA), forming androst-4-ene-3,17-dione and propionyl-CoA. The in vivo substrate is probably a closely analogous bile acid degradation metabolite. This Thermomonospora curvata (strain ATCC 19995 / DSM 43183 / JCM 3096 / KCTC 9072 / NBRC 15933 / NCIMB 10081 / Henssen B9) protein is Steroid side-chain-cleaving aldolase.